A 911-amino-acid chain; its full sequence is Protein translocase subunit SecA (911 aa).

ATP-binding positions include Gln87, 105–109, and Asp512; that span reads GEGKT. A compositionally biased stretch (basic and acidic residues) spans 561–571; the sequence is RHESRRIDNQL. A disordered region spans residues 561 to 583; the sequence is RHESRRIDNQLRGRSGRQGDPGS. Residues Cys895, Cys897, Cys906, and His907 each coordinate Zn(2+).

Belongs to the SecA family. Monomer and homodimer. Part of the essential Sec protein translocation apparatus which comprises SecA, SecYEG and auxiliary proteins SecDF-YajC and YidC. Requires Zn(2+) as cofactor.

It is found in the cell inner membrane. It localises to the cytoplasm. The enzyme catalyses ATP + H2O + cellular proteinSide 1 = ADP + phosphate + cellular proteinSide 2.. Functionally, part of the Sec protein translocase complex. Interacts with the SecYEG preprotein conducting channel. Has a central role in coupling the hydrolysis of ATP to the transfer of proteins into and across the cell membrane, serving both as a receptor for the preprotein-SecB complex and as an ATP-driven molecular motor driving the stepwise translocation of polypeptide chains across the membrane. In Pseudomonas putida (strain W619), this protein is Protein translocase subunit SecA.